A 590-amino-acid polypeptide reads, in one-letter code: Leishmanolysin (590 aa).

Residues 1-39 form the signal peptide; it reads MSVDSSSTHRHRSVAARLVRLAAAGAAVIAAVGTAAAWA. Positions 40-87 are cleaved as a propeptide — activation peptide; that stretch reads HAGAVQHRCIHDAMQARVRQSVARHHTAPGAVSAVGLSYVTLGAAPTV. Cystine bridges form between Cys-112–Cys-129 and Cys-178–Cys-217. His-251 is a binding site for Zn(2+). The active site involves Glu-252. His-255 contributes to the Zn(2+) binding site. Asn-287 carries N-linked (GlcNAc...) asparagine glycosylation. Cystine bridges form between Cys-301/Cys-373, Cys-380/Cys-443, Cys-393/Cys-412, Cys-402/Cys-477, Cys-454/Cys-498, Cys-503/Cys-553, and Cys-523/Cys-546. Zn(2+) is bound at residue His-321. The GPI-anchor amidated asparagine moiety is linked to residue Asn-565. Positions 566 to 590 are cleaved as a propeptide — removed in mature form; that stretch reads AAAGRRGPRAAATALLVAALLAVAL.

This sequence belongs to the peptidase M8 family. The cofactor is Zn(2+).

The protein resides in the cell membrane. It catalyses the reaction Preference for hydrophobic residues at P1 and P1' and basic residues at P2' and P3'. A model nonapeptide is cleaved at -Ala-Tyr-|-Leu-Lys-Lys-.. Has an integral role during the infection of macrophages in the mammalian host. The protein is Leishmanolysin (gp63) of Leishmania donovani.